Consider the following 251-residue polypeptide: Hydroxyacylglutathione hydrolase (251 aa).

Zn(2+) contacts are provided by histidine 53, histidine 55, aspartate 57, histidine 58, histidine 110, aspartate 127, and histidine 165.

The protein belongs to the metallo-beta-lactamase superfamily. Glyoxalase II family. As to quaternary structure, monomer. It depends on Zn(2+) as a cofactor.

It catalyses the reaction an S-(2-hydroxyacyl)glutathione + H2O = a 2-hydroxy carboxylate + glutathione + H(+). The protein operates within secondary metabolite metabolism; methylglyoxal degradation; (R)-lactate from methylglyoxal: step 2/2. Functionally, thiolesterase that catalyzes the hydrolysis of S-D-lactoyl-glutathione to form glutathione and D-lactic acid. The chain is Hydroxyacylglutathione hydrolase from Klebsiella pneumoniae subsp. pneumoniae (strain ATCC 700721 / MGH 78578).